We begin with the raw amino-acid sequence, 293 residues long: Non-homologous end joining protein Ku (293 aa).

In terms of domain architecture, Ku spans Ile-10–Ala-195. The required for dimerization stretch occupies residues Ser-216–Lys-229. Residues Arg-260–Ala-293 are disordered. Residues Gly-265–Gly-280 show a composition bias toward basic and acidic residues.

The protein belongs to the prokaryotic Ku family. In terms of assembly, homodimer, may form higher-order multimers on DNA. Non-dimerized protein does not stimulate LigD ligase activity. Probably interacts with LigD.

With LigD forms a non-homologous end joining (NHEJ) DNA repair enzyme, which repairs dsDNA breaks with reduced fidelity. Stimulates rNTP addition to DSB and end joining (ligation) of linear DNA by LigD, on 3'-overhangs and probably also 5'-overhangs and blunt dsDNA breaks. Binds both ends of linear dsDNA protecting it from exonuclease activity. This Pseudomonas aeruginosa (strain ATCC 15692 / DSM 22644 / CIP 104116 / JCM 14847 / LMG 12228 / 1C / PRS 101 / PAO1) protein is Non-homologous end joining protein Ku.